Reading from the N-terminus, the 445-residue chain is Maltoporin 2 (445 aa).

The first 25 residues, 1 to 25 (MKMKAKWLPIAAAVTAALASQAAFA), serve as a signal peptide directing secretion.

This sequence belongs to the porin LamB (TC 1.B.3) family. In terms of assembly, homotrimer formed of three 18-stranded antiparallel beta-barrels, containing three independent channels.

Its subcellular location is the cell outer membrane. The catalysed reaction is beta-maltose(in) = beta-maltose(out). In terms of biological role, involved in the transport of maltose and maltodextrins. In Aeromonas salmonicida (strain A449), this protein is Maltoporin 2.